The following is a 529-amino-acid chain: CRISPR-associated endodeoxyribonuclease Cas12f1 (529 aa).

Residues 1–95 form a zinc finger domain (ZF) region; that stretch reads MAKNTITKTL…RGQFPDAVFW (95 aa). Residues C50, H53, C69, and C72 each coordinate Zn(2+). Positions 96–192 are recognition domain (REC); sequence QEISEIFRQL…PTTKSDNFPI (97 aa). Positions 193–312 are wedge domain (WED); sequence PLVKQKGGQY…MLNLSIDVPK (120 aa). Positions 313-321 are linker; that stretch reads IDKGVDPSI. Residues 322 to 473 are ruvC-I; that stretch reads IGGIDVGVKS…RKVAPNNTSK (152 aa). Active-site residues include D326 and E422. A target nucleic acid-binding (TNB) region spans residues 474–508; the sequence is TCSKCGHLNNYFNFEYRKKNKFPHFKCEKCNFKEN. Residues C475 and C478 each contribute to the Zn(2+) site. Residue R490 is part of the active site. Positions 500 and 503 each coordinate Zn(2+). The tract at residues 509-529 is ruvC-II; that stretch reads ADYNAALNISNPKLKSTKEEP. Residue D510 is part of the active site.

Belongs to the CRISPR-associated endonuclease Cas12f family. In terms of assembly, an asymmetric homodimer. Guide RNA is probably required for dimerization. Requires Mg(2+) as cofactor. It depends on Zn(2+) as a cofactor.

Its activity is regulated as follows. Target ssDNA cleavage is inhibited by EDTA. Activity is maximal with 5-50 mM NaCl, is less efficient at higher NaCl concentrations. Its function is as follows. CRISPR (clustered regularly interspaced short palindromic repeat), is an adaptive immune system that provides protection against mobile genetic elements (viruses, transposable elements and conjugative plasmids). CRISPR clusters contain sequences complementary to antecedent mobile elements and target invading nucleic acids. CRISPR clusters are transcribed and processed into CRISPR RNA (crRNA), which requires a trans-encoded small RNA (tracrRNA), but not this protein (in vitro). Upon expression in E.coli of this protein, a mini CRISPR array and the probable tracrRNA, the protein associates with both RNAs. The mini system is not active in E.coli against phiX174 phage, nor is it active in protection against transformation by foreign plasmids. In vitro the purified protein-tracrRNA-crRNA complex cleaves ssDNA complementary to the crRNA; target cleavage requires both tracrRNA and crRNA, but not a protospacer adjacent motif (PAM). The tracrRNA-crRNA can be replaced by a single guide RNA (sgRNA). 2-nucleotide mismatches in the middle of the crRNA:DNA heteroduplex decrease cleavage. Cleavage occurs just downstream of the heteroduplex. Activation of this protein results in non-specific ssDNA degradation in vitro. In vitro and in E.coli (coexpressed with sgRNA) has dsDNA endonuclease activity, recognizing the 5' PAM sequence TTTR; both sgRNA and a PAM are required for activity. Cleaves the target strand 24 and the nontarget strand 22 bases upstream of the PAM (respectively), resulting in 5' overhangs. The 2 monomers interact differently with the sgRNA and target DNA. Mutagenesis of a dimeric construct shows that one of the RuvC monomers probably cleaves both DNA strands. The protein is CRISPR-associated endodeoxyribonuclease Cas12f1 of Uncultured archaeon.